The sequence spans 532 residues: Protein FAM227B (532 aa).

Positions 432–482 form a coiled coil; sequence DNKKDFKRVKQRIKDDIKFLREQQELIDKELDRIQAKASKNLQEVKNEFEN. Positions 494 to 532 are disordered; sequence KEEYGGSTSASESPQSMQSPQSSSSFPTISEDFNNVEEG. Low complexity predominate over residues 500–523; sequence STSASESPQSMQSPQSSSSFPTIS.

The protein belongs to the FAM227 family.

The protein is Protein FAM227B (Fam227b) of Mus musculus (Mouse).